The primary structure comprises 826 residues: Protein FAM171B (826 aa).

Positions 1 to 32 (MARLCRRVPCTLLLGLAVVLLKARLVPAAARA) are cleaved as a signal peptide. Over 33–353 (ELSRSDLSLI…DSKDITAYHT (321 aa)) the chain is Extracellular. The interval 52–71 (QQQQQKQLEEAEEERTEVPG) is disordered. Residues N108, N113, N213, and N268 are each glycosylated (N-linked (GlcNAc...) asparagine). Residues 354–374 (VFLTAILGGTIVIVIGFFAVL) form a helical membrane-spanning segment. Residues 375-826 (LCYCRDKCGT…REERPLIPIN (452 aa)) are Cytoplasmic-facing. Disordered regions lie at residues 429-448 (NAKN…AETE), 474-493 (QNNY…GSKQ), and 774-826 (HPGE…IPIN). Residues 438 to 448 (QKKEPSKAETE) are compositionally biased toward basic and acidic residues. Positions 474–486 (QNNYSRNPTQSLE) are enriched in polar residues. Over residues 774–786 (HPGEESPGRKSTV) the composition is skewed to basic and acidic residues. Position 794 is a phosphoserine (S794). A compositionally biased stretch (basic and acidic residues) spans 805–826 (AKRDSKTNIWKKREERPLIPIN).

It belongs to the FAM171 family.

The protein localises to the cytoplasmic granule. It localises to the membrane. In Homo sapiens (Human), this protein is Protein FAM171B (FAM171B).